The following is a 118-amino-acid chain: T cell receptor gamma variable 5 (118 aa).

Positions 1-17 (MRWALLVLLAFLSPASQ) are cleaved as a signal peptide. Residues 18-118 (KSSNLEGGTK…GVYYCATWDR (101 aa)) enclose the Ig-like domain. Residues cysteine 41 and cysteine 113 are joined by a disulfide bond. Asparagine 106 carries N-linked (GlcNAc...) asparagine glycosylation.

As to quaternary structure, gamma-delta TR is a heterodimer composed of a gamma and delta chain; disulfide-linked. The gamma-delta TR is associated with the transmembrane signaling CD3 coreceptor proteins following the stoichiometry: a single gamma-delta TR heterodimer associates with one CD3D-CD3E heterodimer, one CD3G-CD3E heterodimer and one CD247 homodimer forming a stable octameric structure. Upon activation, gamma-delta TR complex associates with FCER1G to initiate intracellular signaling.

The protein localises to the cell membrane. In terms of biological role, v region of the variable domain of T cell receptor (TR) gamma chain that participates in the antigen recognition. Gamma-delta TRs recognize a variety of self and foreign non-peptide antigens frequently expressed at the epithelial boundaries between the host and external environment, including endogenous lipids presented by MH-like protein CD1D and phosphoantigens presented by butyrophilin-like molecule BTN3A1. Upon antigen recognition induces rapid, innate-like immune responses involved in pathogen clearance and tissue repair. Binding of gamma-delta TR complex to antigen triggers phosphorylation of immunoreceptor tyrosine-based activation motifs (ITAMs) in the CD3 chains by the LCK and FYN kinases, allowing the recruitment, phosphorylation, and activation of ZAP70 that facilitates phosphorylation of the scaffolding proteins LCP2 and LAT. This lead to the formation of a supramolecular signalosome that recruits the phospholipase PLCG1, resulting in calcium mobilization and ERK activation, ultimately leading to T cell expansion and differentiation into effector cells. Gamma-delta TRs are produced through somatic rearrangement of a limited repertoire of variable (V), diversity (D), and joining (J) genes. The potential diversity of gamma-delta TRs is conferred by the unique ability to rearrange (D) genes in tandem and to utilize all three reading frames. The combinatorial diversity is considerably increased by the sequence exonuclease trimming and random nucleotide (N) region additions which occur during the V-(D)-J rearrangements. This Homo sapiens (Human) protein is T cell receptor gamma variable 5.